The sequence spans 449 residues: Tubulin alpha chain (449 aa).

8 residues coordinate GTP: Q11, E71, S140, G144, T145, T179, N206, and N228. Residue E71 participates in Mg(2+) binding. E254 is a catalytic residue.

Belongs to the tubulin family. In terms of assembly, dimer of alpha and beta chains. A typical microtubule is a hollow water-filled tube with an outer diameter of 25 nm and an inner diameter of 15 nM. Alpha-beta heterodimers associate head-to-tail to form protofilaments running lengthwise along the microtubule wall with the beta-tubulin subunit facing the microtubule plus end conferring a structural polarity. Microtubules usually have 13 protofilaments but different protofilament numbers can be found in some organisms and specialized cells. The cofactor is Mg(2+).

The protein resides in the cytoplasm. The protein localises to the cytoskeleton. The enzyme catalyses GTP + H2O = GDP + phosphate + H(+). Functionally, tubulin is the major constituent of microtubules, a cylinder consisting of laterally associated linear protofilaments composed of alpha- and beta-tubulin heterodimers. Microtubules grow by the addition of GTP-tubulin dimers to the microtubule end, where a stabilizing cap forms. Below the cap, tubulin dimers are in GDP-bound state, owing to GTPase activity of alpha-tubulin. The chain is Tubulin alpha chain (TUB1) from Gibberella zeae (strain ATCC MYA-4620 / CBS 123657 / FGSC 9075 / NRRL 31084 / PH-1) (Wheat head blight fungus).